A 697-amino-acid chain; its full sequence is Long-chain-fatty-acid--CoA ligase 6 (697 aa).

The chain crosses the membrane as a helical; Signal-anchor for type III membrane protein span at residues 25–45 (LSATTLVSMGALAAILAYWLT). The Cytoplasmic segment spans residues 46–697 (HRPKALQPPC…QIEELYSISM (652 aa)).

Belongs to the ATP-dependent AMP-binding enzyme family. Mg(2+) serves as cofactor. As to expression, expressed predominantly in brain and, to a much lesser extent, in heart and adrenal.

It is found in the mitochondrion outer membrane. The protein localises to the peroxisome membrane. Its subcellular location is the microsome membrane. It localises to the endoplasmic reticulum membrane. The enzyme catalyses a long-chain fatty acid + ATP + CoA = a long-chain fatty acyl-CoA + AMP + diphosphate. It carries out the reaction (5Z,8Z,11Z,14Z)-eicosatetraenoate + ATP + CoA = (5Z,8Z,11Z,14Z)-eicosatetraenoyl-CoA + AMP + diphosphate. The catalysed reaction is 15-hydroxy-(5Z,8Z,11Z,13E)-eicosatetraenoate + ATP + CoA = 15-hydroxy-(5Z,8Z,11Z,13E)-eicosatetraenoyl-CoA + AMP + diphosphate. It catalyses the reaction 12-hydroxy-(5Z,8Z,10E,14Z)-eicosatetraenoate + ATP + CoA = 12-hydroxy-(5Z,8Z,10E,14Z)-eicosatetraenoyl-CoA + AMP + diphosphate. The enzyme catalyses 5-hydroxy-(6E,8Z,11Z,14Z)-eicosatetraenoate + ATP + CoA = 5-hydroxy-(6E,8Z,11Z,14Z)-eicosatetraenoyl-CoA + AMP + diphosphate. It carries out the reaction hexadecanoate + ATP + CoA = hexadecanoyl-CoA + AMP + diphosphate. The catalysed reaction is (E)-hexadec-2-enoate + ATP + CoA = (2E)-hexadecenoyl-CoA + AMP + diphosphate. Functionally, catalyzes the conversion of long-chain fatty acids to their active form acyl-CoA for both synthesis of cellular lipids, and degradation via beta-oxidation. Plays an important role in fatty acid metabolism in brain and the acyl-CoAs produced may be utilized exclusively for the synthesis of the brain lipid. This chain is Long-chain-fatty-acid--CoA ligase 6, found in Rattus norvegicus (Rat).